Reading from the N-terminus, the 296-residue chain is Enoyl-CoA hydratase domain-containing protein 2, mitochondrial (296 aa).

Lys-101 is subject to N6-acetyllysine; alternate. Lys-101 bears the N6-succinyllysine; alternate mark.

The protein belongs to the enoyl-CoA hydratase/isomerase family.

Its subcellular location is the mitochondrion. This Bos taurus (Bovine) protein is Enoyl-CoA hydratase domain-containing protein 2, mitochondrial (ECHDC2).